The sequence spans 453 residues: Ribosomal protein uS12 methylthiotransferase RimO (453 aa).

In terms of domain architecture, MTTase N-terminal spans 5 to 120 (PKVGFVSLGC…VMQAVHSHLP (116 aa)). 6 residues coordinate [4Fe-4S] cluster: C14, C50, C79, C151, C155, and C158. Positions 137-382 (LTPRHYAYLK…MEVAEEVSAN (246 aa)) constitute a Radical SAM core domain. The TRAM domain occupies 385-453 (QRKIGKTLKV…ADGHDLWGEV (69 aa)).

This sequence belongs to the methylthiotransferase family. RimO subfamily. Requires [4Fe-4S] cluster as cofactor.

It is found in the cytoplasm. It catalyses the reaction L-aspartate(89)-[ribosomal protein uS12]-hydrogen + (sulfur carrier)-SH + AH2 + 2 S-adenosyl-L-methionine = 3-methylsulfanyl-L-aspartate(89)-[ribosomal protein uS12]-hydrogen + (sulfur carrier)-H + 5'-deoxyadenosine + L-methionine + A + S-adenosyl-L-homocysteine + 2 H(+). Catalyzes the methylthiolation of an aspartic acid residue of ribosomal protein uS12. This is Ribosomal protein uS12 methylthiotransferase RimO from Burkholderia orbicola (strain MC0-3).